Consider the following 471-residue polypeptide: MGFLWTGSWILVLVLNSGPIQAFPKPEGSQDKSLHNRELSAERPLNEQIAEAEADKIKKAFPSESKPSESNYSSVDNLNLLRAITEKETVEKERQSIRSPPFDNQLNVEDADSTKNRKLIDEYDSTKSGLDHKFQDDPDGLHQLDGTPLTAEDIVHKIATRIYEENDRGVFDKIVSKLLNLGLITESQAHTLEDEVAEALQKLISKEANNYEETLDKPTSRTENQDGKIPEKVTPVAAVQDGFTNRENDETVSNTLTLSNGLERRTNPHREDDFEELQYFPNFYALLTSIDSEKEAKEKETLITIMKTLIDFVKMMVKYGTISPEEGVSYLENLDETIALQTKNKLEKNTTDSKSKLFPAPPEKSQEETDSTKEEAAKMEKEYGSLKDSTKDDNSNLGGKTDEATGKTEAYLEAIRKNIEWLKKHNKKGNKEDYDLSKMRDFINQQADAYVEKGILDKEEANAIKRIYSSL.

An N-terminal signal peptide occupies residues 1-22 (MGFLWTGSWILVLVLNSGPIQA). Disordered stretches follow at residues 24–45 (PKPE…ERPL), 89–108 (TVEK…QLNV), and 345–404 (KLEK…TDEA). Residues 28–45 (GSQDKSLHNRELSAERPL) show a composition bias toward basic and acidic residues. At S40 the chain carries Phosphoserine. Residue S40 is glycosylated (O-linked (Xyl...) (chondroitin sulfate) serine). Basic and acidic residues-rich tracts occupy residues 345–355 (KLEKNTTDSKS) and 364–404 (KSQE…TDEA). Residue S365 is modified to Phosphoserine.

As to quaternary structure, interacts with CHGA. Interacts with secretogranin II/SCG2. Interacts (via C-terminus) with CPE. Expressed in various brain areas, with highest levels in the arcuate nucleus and the lateral hypothalamic area, as well as the paraventricular nucleus and the ventromedial hypothalamus (at protein level).

Its subcellular location is the cytoplasmic vesicle. It localises to the secretory vesicle. It is found in the secretory vesicle membrane. The protein localises to the secreted. Member of the granin protein family that regulates the biogenesis of secretory granules. Acts as a sorting receptor for intragranular proteins including chromogranin A/CHGA. May also play a role in angiogenesis. Promotes endothelial proliferation, migration and tube formation through MEK/ERK signaling pathway. This chain is Secretogranin-3 (Scg3), found in Mus musculus (Mouse).